Reading from the N-terminus, the 1180-residue chain is Integrin alpha-1 (1180 aa).

A signal peptide spans 1 to 28 (MVPRRPASLEVTVACIWLLTVILGFCVS). Residues 29-1142 (FNVDVKNSMS…SKDGLPGRVP (1114 aa)) are Extracellular-facing. Residues 30–91 (NVDVKNSMSF…CPVGRERAMP (62 aa)) form an FG-GAP 1 repeat. C82 and C92 are joined by a disulfide. N-linked (GlcNAc...) asparagine glycosylation is found at N100, N105, N112, N217, N317, N341, N402, N418, and N459. An FG-GAP 2 repeat occupies 101-160 (TSIPNVTEIKENMTFGSTLVTNPNGGFLACGPLYAYRCGHLHYTTGICSDVSPTFQVVNS). In terms of domain architecture, VWFA spans 175–364 (IVLDGSNSIY…LGERIFALEA (190 aa)). One copy of the FG-GAP 3 repeat lies at 365 to 417 (TADQSAASFEMEMSQTGFSAHYSQDWVMLGAVGAYDWNGTVVMQKANQMVIPH). 4 FG-GAP repeats span residues 422 to 474 (QTEP…DGNI), 475 to 537 (NILQ…RFEY), 556 to 614 (SCTK…TIRE), and 618 to 678 (QRIP…FEPN). Ca(2+)-binding residues include D497, D499, D501, and D505. N531 carries N-linked (GlcNAc...) asparagine glycosylation. Residues D579, N581, D583, D587, D641, N643, D645, and D649 each contribute to the Ca(2+) site. A disulfide bridge connects residues C687 and C696. Residues N698, N747, and N779 are each glycosylated (N-linked (GlcNAc...) asparagine). C702 and C755 form a disulfide bridge. Cysteines 807 and 813 form a disulfide. N-linked (GlcNAc...) asparagine glycans are attached at residues N820, N839, N882, N907, N938, N965, N973, and N1007. C877 and C885 are joined by a disulfide. 2 disulfide bridges follow: C1029–C1062 and C1066–C1073. N1084, N1103, and N1114 each carry an N-linked (GlcNAc...) asparagine glycan. The chain crosses the membrane as a helical span at residues 1143-1165 (LWVILLSAFAGLLLLMLLILALW). Topologically, residues 1166 to 1180 (KIGFFKRPLKKKMEK) are cytoplasmic. The GFFKR motif motif lies at 1168–1172 (GFFKR).

Belongs to the integrin alpha chain family. In terms of assembly, heterodimer of an alpha and a beta subunit. Alpha-1 associates with beta-1. Interacts with RAB21. Interacts (via cytoplasmic domain) with PTPN2; activates PTPN2 phosphatase activity towards EGFR and negatively regulates EGF signaling.

The protein localises to the membrane. Its function is as follows. Integrin alpha-1/beta-1 is a receptor for laminin and collagen. It recognizes the proline-hydroxylated sequence G-F-P-G-E-R in collagen. Involved in anchorage-dependent, negative regulation of EGF-stimulated cell growth. The polypeptide is Integrin alpha-1 (Itga1) (Rattus norvegicus (Rat)).